A 411-amino-acid polypeptide reads, in one-letter code: Tyrosine--tRNA ligase (411 aa).

The 'HIGH' region motif lies at 48-57 (PTAPDIHLGH). Positions 232-236 (KMSKS) match the 'KMSKS' region motif. Residue Lys235 coordinates ATP. Residues 347-409 (VLLPKVLFSA…GKRRFLKIIF (63 aa)) form the S4 RNA-binding domain.

Belongs to the class-I aminoacyl-tRNA synthetase family. TyrS type 2 subfamily. In terms of assembly, homodimer.

It localises to the cytoplasm. The enzyme catalyses tRNA(Tyr) + L-tyrosine + ATP = L-tyrosyl-tRNA(Tyr) + AMP + diphosphate + H(+). Its function is as follows. Catalyzes the attachment of tyrosine to tRNA(Tyr) in a two-step reaction: tyrosine is first activated by ATP to form Tyr-AMP and then transferred to the acceptor end of tRNA(Tyr). The chain is Tyrosine--tRNA ligase from Carboxydothermus hydrogenoformans (strain ATCC BAA-161 / DSM 6008 / Z-2901).